The following is a 387-amino-acid chain: Dual specificity mitogen-activated protein kinase kinase mek-2 (387 aa).

The disordered stretch occupies residues M1 to P37. Polar residues predominate over residues P16 to G25. Over residues E26–T35 the composition is skewed to low complexity. Residues L73–F360 enclose the Protein kinase domain. Residues L79 to V87 and K102 each bind ATP. The active-site Proton acceptor is the D195. 2 positions are modified to phosphoserine: S223 and S227.

The protein belongs to the protein kinase superfamily. STE Ser/Thr protein kinase family. MAP kinase kinase subfamily. In terms of assembly, interacts with ksr-1.

It catalyses the reaction L-seryl-[protein] + ATP = O-phospho-L-seryl-[protein] + ADP + H(+). It carries out the reaction L-threonyl-[protein] + ATP = O-phospho-L-threonyl-[protein] + ADP + H(+). The enzyme catalyses L-tyrosyl-[protein] + ATP = O-phospho-L-tyrosyl-[protein] + ADP + H(+). With respect to regulation, activated by tyrosine and threonine phosphorylation catalyzed by MAP kinase kinase kinases. Functions in the let-60 Ras signaling pathway; acts downstream of lin-45 raf kinase, but before the sur-1/mpk-1 gene product in controlling vulval cell differentiation. Required for progression of developing oocytes through the pachytene stage. Plays a role in responses to M.nematophilum-mediated bacterial infection by promoting tail swelling and preventing constipation. Involved in fluid homeostasis. Positively regulates lifespan upstream of mpk-1. The polypeptide is Dual specificity mitogen-activated protein kinase kinase mek-2 (mek-2) (Caenorhabditis elegans).